Here is a 229-residue protein sequence, read N- to C-terminus: Large ribosomal subunit protein bL25 (229 aa).

Disordered regions lie at residues Met-1–Arg-21 and Asn-182–Lys-229. Over residues Pro-195–Ala-222 the composition is skewed to low complexity.

The protein belongs to the bacterial ribosomal protein bL25 family. CTC subfamily. As to quaternary structure, part of the 50S ribosomal subunit; part of the 5S rRNA/L5/L18/L25 subcomplex. Contacts the 5S rRNA. Binds to the 5S rRNA independently of L5 and L18.

In terms of biological role, this is one of the proteins that binds to the 5S RNA in the ribosome where it forms part of the central protuberance. This Sorangium cellulosum (strain So ce56) (Polyangium cellulosum (strain So ce56)) protein is Large ribosomal subunit protein bL25.